We begin with the raw amino-acid sequence, 455 residues long: Vimentin (455 aa).

Residues 1–87 (MASRTNTSSY…GLADAINTEF (87 aa)) form a head region. Positions 87–122 (FKTNRTNEKAEMQHLNDRFASYIDKVRFLEQQNKIL) form a coiled coil. The coil 1A stretch occupies residues 88–122 (KTNRTNEKAEMQHLNDRFASYIDKVRFLEQQNKIL). In terms of domain architecture, IF rod spans 94–402 (EKAEMQHLND…KLLEGEESRI (309 aa)). A linker 1 region spans residues 123 to 144 (IAELEQMRGKGSSRVGDLYQDE). Residues 145–236 (MRELRRQVDQ…KLHDEELAEL (92 aa)) adopt a coiled-coil conformation. The segment at 145-236 (MRELRRQVDQ…KLHDEELAEL (92 aa)) is coil 1B. A linker 12 region spans residues 237 to 259 (QIQIQEQHVQIDMEVAKPDLTAA). A coil 2 region spans residues 260–398 (LKDVRQQYET…ATYRKLLEGE (139 aa)). The stretch at 294–398 (ARNNEAIRLA…ATYRKLLEGE (105 aa)) forms a coiled coil. The tail stretch occupies residues 399–455 (ESRITTPFPNLSSLTLRETMKETRPAMDSLSKKVVIKTIETRDGHIINESSQNDDLE).

This sequence belongs to the intermediate filament family. Homomer assembled from elementary dimers. In terms of processing, one of the most prominent phosphoproteins in various cells of mesenchymal origin. Phosphorylation is enhanced during cell division, at which time vimentin filaments are significantly reorganized.

It is found in the cytoplasm. The protein localises to the cytoskeleton. It localises to the nucleus matrix. Vimentins are class-III intermediate filaments found in various non-epithelial cells, especially mesenchymal cells. Vimentin is attached to the nucleus, endoplasmic reticulum, and mitochondria, either laterally or terminally. The protein is Vimentin (vim) of Cyprinus carpio (Common carp).